The chain runs to 197 residues: Probable molybdenum cofactor guanylyltransferase (197 aa).

Residues 6 to 8 (LAG), Lys18, Asp65, and Asp97 each bind GTP. Asp97 provides a ligand contact to Mg(2+).

This sequence belongs to the MobA family. It depends on Mg(2+) as a cofactor.

The protein localises to the cytoplasm. The catalysed reaction is Mo-molybdopterin + GTP + H(+) = Mo-molybdopterin guanine dinucleotide + diphosphate. In terms of biological role, transfers a GMP moiety from GTP to Mo-molybdopterin (Mo-MPT) cofactor (Moco or molybdenum cofactor) to form Mo-molybdopterin guanine dinucleotide (Mo-MGD) cofactor. The protein is Probable molybdenum cofactor guanylyltransferase of Staphylococcus carnosus (strain TM300).